Reading from the N-terminus, the 74-residue chain is ATP synthase F(1) complex subunit epsilon, mitochondrial (74 aa).

This sequence belongs to the eukaryotic ATPase epsilon family. In terms of assembly, component of the ATP synthase complex composed at least of ATP5F1A/subunit alpha, ATP5F1B/subunit beta, ATP5MC1/subunit c (homooctomer), MT-ATP6/subunit a, MT-ATP8/subunit 8, ATP5ME/subunit e, ATP5MF/subunit f, ATP5MG/subunit g, ATP5MK/subunit k, ATP5MJ/subunit j, ATP5F1C/subunit gamma, ATP5F1D/subunit delta, ATP5F1E/subunit epsilon, ATP5PF/subunit F6, ATP5PB/subunit b, ATP5PD/subunit d, ATP5PO/subunit OSCP. ATP synthase complex consists of a soluble F(1) head domain (subunits alpha(3) and beta(3)) - the catalytic core - and a membrane F(0) domain - the membrane proton channel (subunits c, a, 8, e, f, g, k and j). These two domains are linked by a central stalk (subunits gamma, delta, and epsilon) rotating inside the F1 region and a stationary peripheral stalk (subunits F6, b, d, and OSCP).

It is found in the mitochondrion. The protein localises to the mitochondrion inner membrane. Functionally, subunit epsilon, of the mitochondrial membrane ATP synthase complex (F(1)F(0) ATP synthase or Complex V) that produces ATP from ADP in the presence of a proton gradient across the membrane which is generated by electron transport complexes of the respiratory chain. ATP synthase complex consist of a soluble F(1) head domain - the catalytic core - and a membrane F(1) domain - the membrane proton channel. These two domains are linked by a central stalk rotating inside the F(1) region and a stationary peripheral stalk. During catalysis, ATP synthesis in the catalytic domain of F(1) is coupled via a rotary mechanism of the central stalk subunits to proton translocation. In vivo, can only synthesize ATP although its ATP hydrolase activity can be activated artificially in vitro. May be essential for the assembly of F(1) and may play an important role in the incorporation of the hydrophobic subunit c into the F(1)-c oligomer rotor of the mitochondrial ATP synthase complex. In Dictyostelium discoideum (Social amoeba), this protein is ATP synthase F(1) complex subunit epsilon, mitochondrial.